The chain runs to 240 residues: Ribosomal RNA small subunit methyltransferase J (240 aa).

Residues 93 to 94 and Asp-162 contribute to the S-adenosyl-L-methionine site; that span reads RD.

The protein belongs to the methyltransferase superfamily. RsmJ family.

It localises to the cytoplasm. It catalyses the reaction guanosine(1516) in 16S rRNA + S-adenosyl-L-methionine = N(2)-methylguanosine(1516) in 16S rRNA + S-adenosyl-L-homocysteine + H(+). Functionally, specifically methylates the guanosine in position 1516 of 16S rRNA. The protein is Ribosomal RNA small subunit methyltransferase J of Francisella philomiragia subsp. philomiragia (strain ATCC 25017 / CCUG 19701 / FSC 153 / O#319-036).